We begin with the raw amino-acid sequence, 591 residues long: V-type ATP synthase alpha chain (591 aa).

242–249 (GPFGAGKT) contributes to the ATP binding site.

It belongs to the ATPase alpha/beta chains family.

It carries out the reaction ATP + H2O + 4 H(+)(in) = ADP + phosphate + 5 H(+)(out). Produces ATP from ADP in the presence of a proton gradient across the membrane. The V-type alpha chain is a catalytic subunit. The chain is V-type ATP synthase alpha chain from Chlamydia abortus (strain DSM 27085 / S26/3) (Chlamydophila abortus).